Consider the following 210-residue polypeptide: MIKQPALAQEQYACVYAWLALLFFREVDDEGLIQLQSAEIADWLALLKRQPALAASVALLEQKIAALSLRQDAQLELAADFCGLFLMTDKKSALPYASQYPQQEPGMIKHLLLEAGMEVNDDFKEPADHLAIYLELLSHLHFSLGESFQQRRMNKLRQKTLSSLLEWLPEFTNNCLKHDSYGFYAALSQLLLAIVLFDDGKEDLSIVAAE.

The protein belongs to the TorD/DmsD family. TorD subfamily.

It is found in the cytoplasm. In terms of biological role, involved in the biogenesis of TorA. Acts on TorA before the insertion of the molybdenum cofactor and, as a result, probably favors a conformation of the apoenzyme that is competent for acquiring the cofactor. The protein is Chaperone protein TorD of Salmonella agona (strain SL483).